Here is a 354-residue protein sequence, read N- to C-terminus: GTPase Obg (354 aa).

The 159-residue stretch at 1-159 folds into the Obg domain; it reads MKYIDEAIIH…ADLKLELKVL (159 aa). In terms of domain architecture, OBG-type G spans 160 to 334; the sequence is ADVGLLGMPN…LTYAIMEFLE (175 aa). Residues 166 to 173, 191 to 195, 213 to 216, 284 to 287, and 315 to 317 each bind GTP; these read GMPNAGKS, FTTMH, DIPG, NKVD, and SAM. The Mg(2+) site is built by Ser-173 and Thr-193.

It belongs to the TRAFAC class OBG-HflX-like GTPase superfamily. OBG GTPase family. Monomer. The cofactor is Mg(2+).

It is found in the cytoplasm. In terms of biological role, an essential GTPase which binds GTP, GDP and possibly (p)ppGpp with moderate affinity, with high nucleotide exchange rates and a fairly low GTP hydrolysis rate. Plays a role in control of the cell cycle, stress response, ribosome biogenesis and in those bacteria that undergo differentiation, in morphogenesis control. This is GTPase Obg from Nitrosospira multiformis (strain ATCC 25196 / NCIMB 11849 / C 71).